The following is a 198-amino-acid chain: Guanylyl cyclase-activating protein 2 (198 aa).

G2 is lipidated: N-myristoyl glycine. 4 EF-hand domains span residues 16 to 51, 52 to 87, 88 to 123, and 139 to 174; these read DVAE…QDNH, EAAE…VLRG, KLEH…IYKL, and TPEE…DKWV. Ca(2+) contacts are provided by D65, N67, D69, T71, E76, D101, D103, N105, C107, E112, D152, N154, D156, Q158, and E163.

As to quaternary structure, undergoes dimerization at low calcium ions concentration, while the presence of calcium ions inhibits its dimerization. Dimerization correlates with its ability to activate GC. As to expression, retina and pineal gland.

In terms of biological role, stimulates synthesis of cGMP in photoreceptors. Thought to mediate Ca(2+)-sensitive regulation of retinal guanylyl cyclase (GC), a key event in recovery of the dark state of rod photoreceptors following light exposure. This chain is Guanylyl cyclase-activating protein 2 (GUCA1B), found in Gallus gallus (Chicken).